The chain runs to 151 residues: Globin CTT-IIIA (151 aa).

The Globin domain maps to 8-147 (SMTDAQVAAV…MFHVIFNALD (140 aa)). His-98 serves as a coordination point for heme b.

The protein belongs to the globin family. As to quaternary structure, monomer.

The polypeptide is Globin CTT-IIIA (Chironomus thummi thummi (Midge)).